A 296-amino-acid chain; its full sequence is 4-hydroxybenzoate octaprenyltransferase (296 aa).

Helical transmembrane passes span 28-48, 52-72, 102-122, 145-167, 174-196, 219-239, 241-261, and 275-295; these read PIGIYLLLWPTLSAVWIAGNG, LANVLIFGLGVVLMRAAGCCI, ALALFAMLVGVSFLLVLCTNS, TYYPQVVLGAAYSWGIPMAFTAA, SAWLLYIANLLWTVGYDTYYAMV, NIILTLQLLSLGCLLLAGSRF, LGGWFHLGLLGAAACFAWEYW, and FLHNHWAGLLVFIGVVLDYAF.

The protein belongs to the UbiA prenyltransferase family. Mg(2+) serves as cofactor.

The protein resides in the cell inner membrane. It carries out the reaction all-trans-octaprenyl diphosphate + 4-hydroxybenzoate = 4-hydroxy-3-(all-trans-octaprenyl)benzoate + diphosphate. Its pathway is cofactor biosynthesis; ubiquinone biosynthesis. Its function is as follows. Catalyzes the prenylation of para-hydroxybenzoate (PHB) with an all-trans polyprenyl group. Mediates the second step in the final reaction sequence of ubiquinone-8 (UQ-8) biosynthesis, which is the condensation of the polyisoprenoid side chain with PHB, generating the first membrane-bound Q intermediate 3-octaprenyl-4-hydroxybenzoate. The protein is 4-hydroxybenzoate octaprenyltransferase of Pseudomonas putida (strain GB-1).